A 584-amino-acid chain; its full sequence is Aspartate--tRNA(Asp/Asn) ligase (584 aa).

Glu-173 contacts L-aspartate. The interval 197–200 (QLFK) is aspartate. Residue Arg-219 coordinates L-aspartate. ATP is bound by residues 219 to 221 (RDE) and Gln-228. His-446 provides a ligand contact to L-aspartate. Glu-476 is a binding site for ATP. Arg-483 provides a ligand contact to L-aspartate. 528-531 (GLDR) contributes to the ATP binding site.

It belongs to the class-II aminoacyl-tRNA synthetase family. Type 1 subfamily. In terms of assembly, homodimer.

It is found in the cytoplasm. It carries out the reaction tRNA(Asx) + L-aspartate + ATP = L-aspartyl-tRNA(Asx) + AMP + diphosphate. Its function is as follows. Aspartyl-tRNA synthetase with relaxed tRNA specificity since it is able to aspartylate not only its cognate tRNA(Asp) but also tRNA(Asn). Reaction proceeds in two steps: L-aspartate is first activated by ATP to form Asp-AMP and then transferred to the acceptor end of tRNA(Asp/Asn). The sequence is that of Aspartate--tRNA(Asp/Asn) ligase from Sulfurovum sp. (strain NBC37-1).